We begin with the raw amino-acid sequence, 331 residues long: Protein mono-ADP-ribosyltransferase PARP11 (331 aa).

Lysine 11 carries the N6-(ADP-ribosyl)lysine modification. A WWE domain is found at serine 15–arginine 99. An ADP-ribosylcysteine mark is found at cysteine 49 and cysteine 65. The residue at position 80 (aspartate 80) is an ADP-ribosyl aspartic acid. Residues isoleucine 116 to histidine 331 enclose the PARP catalytic domain.

It belongs to the ARTD/PARP family. In terms of processing, auto-mono-ADP-ribosylated. In terms of tissue distribution, predominantly expressed in testis, preferentially in postmeiotic germ cells. Also detectable in other tissues, including liver, lung, spleen, thymus and brain.

Its subcellular location is the nucleus. The protein resides in the nuclear pore complex. The catalysed reaction is L-aspartyl-[protein] + NAD(+) = 4-O-(ADP-D-ribosyl)-L-aspartyl-[protein] + nicotinamide. The enzyme catalyses L-cysteinyl-[protein] + NAD(+) = S-(ADP-D-ribosyl)-L-cysteinyl-[protein] + nicotinamide + H(+). It catalyses the reaction L-glutamyl-[protein] + NAD(+) = 5-O-(ADP-D-ribosyl)-L-glutamyl-[protein] + nicotinamide. It carries out the reaction L-lysyl-[protein] + NAD(+) = N(6)-(ADP-D-ribosyl)-L-lysyl-[protein] + nicotinamide + H(+). Its function is as follows. Mono-ADP-ribosyltransferase that mediates mono-ADP-ribosylation of target proteins. Plays a role in nuclear envelope stability and nuclear remodeling during spermiogenesis. Inhibits the type I interferon activated signaling pathway. Mechanistically, mono-ADP-ribosylates beta-TrCP/BTRC to promote IFNAR1 ubiquitination and protect BTRC from ubiquitin-proteasome degradation. The polypeptide is Protein mono-ADP-ribosyltransferase PARP11 (Mus musculus (Mouse)).